Here is a 298-residue protein sequence, read N- to C-terminus: Mitochondrial distribution and morphology protein 12 (298 aa).

The region spanning 1–298 (MSIELDWTGL…VYPHFYTLYL (298 aa)) is the SMP-LTD domain. Residues 118–142 (SEHEESLSRWSDTESETGTCDSSSL) are disordered. The segment covering 133–142 (ETGTCDSSSL) has biased composition (polar residues).

It belongs to the MDM12 family. As to quaternary structure, component of the ER-mitochondria encounter structure (ERMES) or MDM complex, composed of MMM1, MDM10, MDM12 and MDM34. An MMM1 homodimer associates with one molecule of MDM12 on each side in a pairwise head-to-tail manner, and the SMP-LTD domains of MMM1 and MDM12 generate a continuous hydrophobic tunnel for phospholipid trafficking.

It is found in the mitochondrion outer membrane. The protein resides in the endoplasmic reticulum membrane. Component of the ERMES/MDM complex, which serves as a molecular tether to connect the endoplasmic reticulum (ER) and mitochondria. Components of this complex are involved in the control of mitochondrial shape and protein biogenesis, and function in nonvesicular lipid trafficking between the ER and mitochondria. MDM12 is required for the interaction of the ER-resident membrane protein MMM1 and the outer mitochondrial membrane-resident beta-barrel protein MDM10. The MDM12-MMM1 subcomplex functions in the major beta-barrel assembly pathway that is responsible for biogenesis of all mitochondrial outer membrane beta-barrel proteins, and acts in a late step after the SAM complex. The MDM10-MDM12-MMM1 subcomplex further acts in the TOM40-specific pathway after the action of the MDM12-MMM1 complex. Essential for establishing and maintaining the structure of mitochondria and maintenance of mtDNA nucleoids. The sequence is that of Mitochondrial distribution and morphology protein 12 from Malassezia globosa (strain ATCC MYA-4612 / CBS 7966) (Dandruff-associated fungus).